The sequence spans 420 residues: Enolase (420 aa).

(2R)-2-phosphoglycerate is bound at residue glutamine 162. Glutamate 206 serves as the catalytic Proton donor. Mg(2+) is bound by residues aspartate 241, glutamate 282, and aspartate 308. Lysine 333, arginine 362, serine 363, and lysine 384 together coordinate (2R)-2-phosphoglycerate. The active-site Proton acceptor is the lysine 333.

Belongs to the enolase family. Requires Mg(2+) as cofactor.

Its subcellular location is the cytoplasm. The protein localises to the secreted. The protein resides in the cell surface. The enzyme catalyses (2R)-2-phosphoglycerate = phosphoenolpyruvate + H2O. The protein operates within carbohydrate degradation; glycolysis; pyruvate from D-glyceraldehyde 3-phosphate: step 4/5. Functionally, catalyzes the reversible conversion of 2-phosphoglycerate (2-PG) into phosphoenolpyruvate (PEP). It is essential for the degradation of carbohydrates via glycolysis. The protein is Enolase of Methanothrix thermoacetophila (strain DSM 6194 / JCM 14653 / NBRC 101360 / PT) (Methanosaeta thermophila).